The primary structure comprises 104 residues: Integration host factor subunit beta (104 aa).

This sequence belongs to the bacterial histone-like protein family. Heterodimer of an alpha and a beta chain.

Functionally, this protein is one of the two subunits of integration host factor, a specific DNA-binding protein that functions in genetic recombination as well as in transcriptional and translational control. This Chromobacterium violaceum (strain ATCC 12472 / DSM 30191 / JCM 1249 / CCUG 213 / NBRC 12614 / NCIMB 9131 / NCTC 9757 / MK) protein is Integration host factor subunit beta.